Reading from the N-terminus, the 310-residue chain is Homoserine kinase (310 aa).

91-101 (PIGSGLGSSAC) serves as a coordination point for ATP.

It belongs to the GHMP kinase family. Homoserine kinase subfamily.

The protein localises to the cytoplasm. It carries out the reaction L-homoserine + ATP = O-phospho-L-homoserine + ADP + H(+). The protein operates within amino-acid biosynthesis; L-threonine biosynthesis; L-threonine from L-aspartate: step 4/5. Its function is as follows. Catalyzes the ATP-dependent phosphorylation of L-homoserine to L-homoserine phosphate. The sequence is that of Homoserine kinase from Escherichia coli O157:H7.